The following is a 210-amino-acid chain: Somatotropin (210 aa).

The signal sequence occupies residues 1–23 (MARVLVLLSVVLVSLLVNQGRAS). Residue His38 participates in Zn(2+) binding. A disulfide bridge connects residues Cys71 and Cys183. Position 192 (Glu192) interacts with Zn(2+). An intrachain disulfide couples Cys200 to Cys208.

The protein belongs to the somatotropin/prolactin family.

It is found in the secreted. In terms of biological role, growth hormone plays an important role in growth control. The protein is Somatotropin (gh) of Cyprinus carpio (Common carp).